A 427-amino-acid polypeptide reads, in one-letter code: Serine--tRNA ligase (427 aa).

L-serine is bound at residue 231–233; sequence TAE. 262–264 provides a ligand contact to ATP; that stretch reads RSE. Residue Glu285 participates in L-serine binding. 349–352 serves as a coordination point for ATP; the sequence is EISS. Ser385 provides a ligand contact to L-serine.

It belongs to the class-II aminoacyl-tRNA synthetase family. Type-1 seryl-tRNA synthetase subfamily. As to quaternary structure, homodimer. The tRNA molecule binds across the dimer.

It localises to the cytoplasm. It catalyses the reaction tRNA(Ser) + L-serine + ATP = L-seryl-tRNA(Ser) + AMP + diphosphate + H(+). It carries out the reaction tRNA(Sec) + L-serine + ATP = L-seryl-tRNA(Sec) + AMP + diphosphate + H(+). Its pathway is aminoacyl-tRNA biosynthesis; selenocysteinyl-tRNA(Sec) biosynthesis; L-seryl-tRNA(Sec) from L-serine and tRNA(Sec): step 1/1. Functionally, catalyzes the attachment of serine to tRNA(Ser). Is also able to aminoacylate tRNA(Sec) with serine, to form the misacylated tRNA L-seryl-tRNA(Sec), which will be further converted into selenocysteinyl-tRNA(Sec). The polypeptide is Serine--tRNA ligase (Listeria monocytogenes serotype 4b (strain CLIP80459)).